The chain runs to 710 residues: Integrator complex subunit 10 (710 aa).

Ser231, Ser381, and Ser382 each carry phosphoserine. A Glycyl lysine isopeptide (Lys-Gly) (interchain with G-Cter in SUMO2) cross-link involves residue Lys464.

Belongs to the Integrator subunit 10 family. Component of the Integrator complex, composed of core subunits INTS1, INTS2, INTS3, INTS4, INTS5, INTS6, INTS7, INTS8, INTS9/RC74, INTS10, INTS11/CPSF3L, INTS12, INTS13, INTS14 and INTS15. The core complex associates with protein phosphatase 2A subunits PPP2CA and PPP2R1A, to form the Integrator-PP2A (INTAC) complex. INTS10 is part of the tail subcomplex, composed of INTS10, INTS13, INTS14 and INTS15.

It localises to the nucleus. In terms of biological role, component of the integrator complex, a multiprotein complex that terminates RNA polymerase II (Pol II) transcription in the promoter-proximal region of genes. The integrator complex provides a quality checkpoint during transcription elongation by driving premature transcription termination of transcripts that are unfavorably configured for transcriptional elongation: the complex terminates transcription by (1) catalyzing dephosphorylation of the C-terminal domain (CTD) of Pol II subunit POLR2A/RPB1 and SUPT5H/SPT5, (2) degrading the exiting nascent RNA transcript via endonuclease activity and (3) promoting the release of Pol II from bound DNA. The integrator complex is also involved in terminating the synthesis of non-coding Pol II transcripts, such as enhancer RNAs (eRNAs), small nuclear RNAs (snRNAs), telomerase RNAs and long non-coding RNAs (lncRNAs). Within the integrator complex, INTS10 is part of the integrator tail module that acts as a platform for the recruitment of transcription factors at promoters. May be not involved in the recruitment of cytoplasmic dynein to the nuclear envelope, probably as component of the integrator complex. The chain is Integrator complex subunit 10 (Ints10) from Mus musculus (Mouse).